A 257-amino-acid chain; its full sequence is 3-methyl-2-oxobutanoate hydroxymethyltransferase (257 aa).

Residues Asp-42 and Asp-86 each contribute to the Mg(2+) site. 3-methyl-2-oxobutanoate-binding positions include 42–43, Asp-86, and Lys-116; that span reads DS. Glu-118 is a Mg(2+) binding site. Glu-185 serves as the catalytic Proton acceptor.

This sequence belongs to the PanB family. As to quaternary structure, homodecamer; pentamer of dimers. The cofactor is Mg(2+).

The protein resides in the cytoplasm. It carries out the reaction 3-methyl-2-oxobutanoate + (6R)-5,10-methylene-5,6,7,8-tetrahydrofolate + H2O = 2-dehydropantoate + (6S)-5,6,7,8-tetrahydrofolate. It functions in the pathway cofactor biosynthesis; (R)-pantothenate biosynthesis; (R)-pantoate from 3-methyl-2-oxobutanoate: step 1/2. In terms of biological role, catalyzes the reversible reaction in which hydroxymethyl group from 5,10-methylenetetrahydrofolate is transferred onto alpha-ketoisovalerate to form ketopantoate. The protein is 3-methyl-2-oxobutanoate hydroxymethyltransferase of Prochlorococcus marinus (strain MIT 9312).